The chain runs to 741 residues: Photosystem I P700 chlorophyll a apoprotein A2 1 (741 aa).

8 helical membrane-spanning segments follow: residues 46 to 69, 135 to 158, 175 to 199, 273 to 291, 334 to 357, 373 to 399, 421 to 443, and 524 to 542; these read IFAT…FHVA, LYTG…LHLQ, LNHH…HVAI, IAHH…GHMY, LHFQ…QHMY, AALY…IFLV, AIIS…LYVH, and FLVH…LILV. Positions 566 and 575 each coordinate [4Fe-4S] cluster. The next 2 helical transmembrane spans lie at 582-603 and 650-672; these read SFYL…YWHW and LSVW…MFLI. Chlorophyll a is bound by residues H661, M669, and Y677. W678 contacts phylloquinone. A helical transmembrane segment spans residues 714 to 734; the sequence is VVGLAHFTVGYVLTYAAFLIA.

Belongs to the PsaA/PsaB family. As to quaternary structure, the PsaA/B heterodimer binds the P700 chlorophyll special pair and subsequent electron acceptors. PSI consists of a core antenna complex that captures photons, and an electron transfer chain that converts photonic excitation into a charge separation. The cyanobacterial PSI reaction center is composed of one copy each of PsaA,B,C,D,E,F,I,J,K,L,M and X, and forms trimeric complexes. Requires PSI electron transfer chain: 5 chlorophyll a, 1 chlorophyll a', 2 phylloquinones and 3 4Fe-4S clusters. PSI core antenna: 90 chlorophyll a, 22 carotenoids, 3 phospholipids and 1 galactolipid. P700 is a chlorophyll a/chlorophyll a' dimer, A0 is one or more chlorophyll a, A1 is one or both phylloquinones and FX is a shared 4Fe-4S iron-sulfur center. as cofactor.

Its subcellular location is the cellular thylakoid membrane. The enzyme catalyses reduced [plastocyanin] + hnu + oxidized [2Fe-2S]-[ferredoxin] = oxidized [plastocyanin] + reduced [2Fe-2S]-[ferredoxin]. Functionally, psaA and PsaB bind P700, the primary electron donor of photosystem I (PSI), as well as the electron acceptors A0, A1 and FX. PSI is a plastocyanin/cytochrome c6-ferredoxin oxidoreductase, converting photonic excitation into a charge separation, which transfers an electron from the donor P700 chlorophyll pair to the spectroscopically characterized acceptors A0, A1, FX, FA and FB in turn. Oxidized P700 is reduced on the lumenal side of the thylakoid membrane by plastocyanin or cytochrome c6. The polypeptide is Photosystem I P700 chlorophyll a apoprotein A2 1 (Trichormus variabilis (strain ATCC 29413 / PCC 7937) (Anabaena variabilis)).